The primary structure comprises 105 residues: Large ribosomal subunit protein bL34m (105 aa).

The transit peptide at 1 to 16 (MPLFARLCQPQSRRMF) directs the protein to the mitochondrion.

This sequence belongs to the bacterial ribosomal protein bL34 family. In terms of assembly, component of the mitochondrial large ribosomal subunit (mt-LSU). Mature yeast 74S mitochondrial ribosomes consist of a small (37S) and a large (54S) subunit. The 37S small subunit contains a 15S ribosomal RNA (15S mt-rRNA) and 34 different proteins. The 54S large subunit contains a 21S rRNA (21S mt-rRNA) and 46 different proteins.

The protein resides in the mitochondrion. Component of the mitochondrial ribosome (mitoribosome), a dedicated translation machinery responsible for the synthesis of mitochondrial genome-encoded proteins, including at least some of the essential transmembrane subunits of the mitochondrial respiratory chain. The mitoribosomes are attached to the mitochondrial inner membrane and translation products are cotranslationally integrated into the membrane. The sequence is that of Large ribosomal subunit protein bL34m from Saccharomyces cerevisiae (strain ATCC 204508 / S288c) (Baker's yeast).